The sequence spans 561 residues: Putative transport protein YbjL (561 aa).

Transmembrane regions (helical) follow at residues 8–28 (LLNGNYILLLFVVLALGLCLG), 32–52 (LGSIQLGNSIGVLVVSLLLGQ), 66–86 (FMLFIFCVGVEAGPNFFSIFF), 94–114 (MLALVMVGSALVIALGLGKLF), and 158–178 (NLSLGYALTYLIGLVSLIVGA). RCK C-terminal domains follow at residues 200–288 (RGLD…SFRN) and 292–373 (VFDR…RIGF). Helical transmembrane passes span 383–403 (LLAFCAFFVIGLMIGMITFQF), 406–426 (FSFGMGNAAGLLFAGIMLGFM), 451–471 (VFMAGVGLSAGSGINNGLGAI), 475–495 (MLIAGLIVSLVPVVICFLFGA), and 540–560 (AIANVLLTLAGTIIVMVWPGL).

Belongs to the AAE transporter (TC 2.A.81) family. YbjL subfamily.

The protein localises to the cell membrane. This is Putative transport protein YbjL from Shigella boydii serotype 4 (strain Sb227).